Consider the following 500-residue polypeptide: Cholesterol 24-hydroxylase (500 aa).

The chain crosses the membrane as a helical span at residues 3–23 (PGLLLLGSAVLLAFGLCCTFV). A heme-binding site is contributed by cysteine 437.

Belongs to the cytochrome P450 family. It depends on heme as a cofactor. Expressed in high level in the pyramidal cells of the hippocampus, Purkinje cells of the cerebellum, and neuronal cell bodies in layers II/III, V, and VI of the cortex. Expressed in hippocampal and cerebellar interneurons, in retinal ganglion cells, and in a subset of retinal cells localized to the inner nuclear layer (at protein level).

It is found in the endoplasmic reticulum membrane. The protein localises to the microsome membrane. The protein resides in the postsynapse. It localises to the presynapse. Its subcellular location is the cell projection. It is found in the dendrite. It carries out the reaction cholesterol + reduced [NADPH--hemoprotein reductase] + O2 = (24S)-hydroxycholesterol + oxidized [NADPH--hemoprotein reductase] + H2O + H(+). The enzyme catalyses cholestanol + reduced [NADPH--hemoprotein reductase] + O2 = (24S)-hydroxycholestanol + oxidized [NADPH--hemoprotein reductase] + H2O + H(+). It catalyses the reaction 7-dehydrocholesterol + reduced [NADPH--hemoprotein reductase] + O2 = cholesta-5,7-dien-3beta,24S-diol + oxidized [NADPH--hemoprotein reductase] + H2O + H(+). The catalysed reaction is 7-dehydrocholesterol + reduced [NADPH--hemoprotein reductase] + O2 = cholesta-5,7-dien-3beta,25-diol + oxidized [NADPH--hemoprotein reductase] + H2O + H(+). It carries out the reaction desmosterol + reduced [NADPH--hemoprotein reductase] + O2 = (24Z),26-hydroxydesmosterol + oxidized [NADPH--hemoprotein reductase] + H2O + H(+). The enzyme catalyses desmosterol + reduced [NADPH--hemoprotein reductase] + O2 = (24S)-25-epoxycholesterol + oxidized [NADPH--hemoprotein reductase] + H2O + H(+). It catalyses the reaction 4beta-hydroxycholesterol + reduced [NADPH--hemoprotein reductase] + O2 = 4beta,24S-dihydroxycholesterol + oxidized [NADPH--hemoprotein reductase] + H2O + H(+). The catalysed reaction is (24S)-hydroxycholesterol + reduced [NADPH--hemoprotein reductase] + O2 = (24S,25R)-24,26-dihydroxycholesterol + oxidized [NADPH--hemoprotein reductase] + H2O + H(+). It carries out the reaction (24S)-hydroxycholesterol + reduced [NADPH--hemoprotein reductase] + O2 = 24S,25-dihydroxycholesterol + oxidized [NADPH--hemoprotein reductase] + H2O + H(+). The enzyme catalyses 7alpha-hydroxycholesterol + reduced [NADPH--hemoprotein reductase] + O2 = (24S)-7alpha-dihydroxycholesterol + oxidized [NADPH--hemoprotein reductase] + H2O + H(+). It catalyses the reaction progesterone + reduced [NADPH--hemoprotein reductase] + O2 = 17alpha-hydroxyprogesterone + oxidized [NADPH--hemoprotein reductase] + H2O + H(+). The catalysed reaction is testosterone + reduced [NADPH--hemoprotein reductase] + O2 = 16beta,17beta-dihydroxyandrost-4-en-3-one + oxidized [NADPH--hemoprotein reductase] + H2O + H(+). It carries out the reaction testosterone + reduced [NADPH--hemoprotein reductase] + O2 = 2-hydroxytestosterone + oxidized [NADPH--hemoprotein reductase] + H2O + H(+). The enzyme catalyses testosterone + reduced [NADPH--hemoprotein reductase] + O2 = 6beta,17beta-dihydroxyandrost-4-en-3-one + oxidized [NADPH--hemoprotein reductase] + H2O + H(+). It participates in steroid metabolism; cholesterol degradation. It functions in the pathway lipid metabolism; C21-steroid hormone metabolism. Its function is as follows. P450 monooxygenase that plays a major role in cholesterol homeostasis in the brain. Primarily catalyzes the hydroxylation (with S stereochemistry) at C-24 of cholesterol side chain, triggering cholesterol diffusion out of neurons and its further degradation. By promoting constant cholesterol elimination in neurons, may activate the mevalonate pathway and coordinate the synthesis of new cholesterol and nonsterol isoprenoids involved in synaptic activity and learning. Further hydroxylates cholesterol derivatives and hormone steroids on both the ring and side chain of these molecules, converting them into active oxysterols involved in lipid signaling and biosynthesis. Acts as an epoxidase converting cholesta-5,24-dien-3beta-ol/desmosterol into (24S),25-epoxycholesterol, an abundant lipid ligand of nuclear NR1H2 and NR1H3 receptors shown to promote neurogenesis in developing brain. May also catalyze the oxidative metabolism of xenobiotics, such as clotrimazole. The polypeptide is Cholesterol 24-hydroxylase (Mus musculus (Mouse)).